The following is a 712-amino-acid chain: Transferrin-binding protein B (712 aa).

Residues 1-20 (MNNPLVNQAAMVLPVFLLSA) form the signal peptide. C21 is lipidated: N-palmitoyl cysteine. C21 carries S-diacylglycerol cysteine lipidation. The segment at 59–196 (GGYGFAMRLK…YHGKEPSRQL (138 aa)) is N-terminal handle domain. Disordered regions lie at residues 78–104 (EDEVKLDESDWEATGLPDEPKELPKRQ), 123–144 (PYLKPSNHQNGNTGNGINQPKN), 223–256 (IIQPSKSQGDRYSGFSGDDGEEYSNKNKSTLTDG), 309–338 (NGKATATDKPQQNSETKEHPFVSDSSSLSG), 364–398 (SAKTKDKPANGNTAAASGGTDAAASNGAAGTSSEN), 442–495 (ASES…GDTN), and 689–712 (NATNASGNSSATVVFGAKRQQPVR). Residues 95 to 104 (DEPKELPKRQ) show a composition bias toward basic and acidic residues. The span at 128 to 144 (SNHQNGNTGNGINQPKN) shows a compositional bias: polar residues. An N-terminal beta barrel domain region spans residues 197–367 (PASGKITYKG…KVAVVGSAKT (171 aa)). 2 stretches are compositionally biased toward low complexity: residues 372–398 (ANGNTAAASGGTDAAASNGAAGTSSEN) and 446–459 (GNNQANQGTNGGTA). The segment at 389-555 (NGAAGTSSEN…SMFLQGERTD (167 aa)) is C-terminal handle domain. Over residues 462-475 (RKFDHTPESDKKDA) the composition is skewed to basic and acidic residues. Polar residues-rich tracts occupy residues 477–495 (AGTQTNGAQTASNTAGDTN) and 689–700 (NATNASGNSSAT). Residues 556–712 (EKEIPSEQNI…FGAKRQQPVR (157 aa)) are C-terminal beta barrel domain.

The protein belongs to the TbpB family. Isotype II subfamily. As to quaternary structure, binds only human holo-transferrin (TF), via the TF C-terminus. Forms a large complex with TF and TbpA. Interacts via its C-terminal domain with Slam1.

It localises to the cell outer membrane. The protein localises to the cell surface. Its function is as follows. Neisseria acquires iron by extracting it from serum transferrin (TF) in its human host. Acts as a TF receptor and is required for TF utilization. Involved in the initial capture of TF. Helps select only those TF molecules that can be used as an iron source and concentrates them on the cell surface, maintaining the iron-loaded status of the TF C-terminal lobe until its delivery to TbpA. In Neisseria meningitidis serogroup B (strain ATCC BAA-335 / MC58), this protein is Transferrin-binding protein B.